The following is a 475-amino-acid chain: Aspartyl/glutamyl-tRNA(Asn/Gln) amidotransferase subunit B (475 aa).

Belongs to the GatB/GatE family. GatB subfamily. As to quaternary structure, heterotrimer of A, B and C subunits.

The catalysed reaction is L-glutamyl-tRNA(Gln) + L-glutamine + ATP + H2O = L-glutaminyl-tRNA(Gln) + L-glutamate + ADP + phosphate + H(+). It carries out the reaction L-aspartyl-tRNA(Asn) + L-glutamine + ATP + H2O = L-asparaginyl-tRNA(Asn) + L-glutamate + ADP + phosphate + 2 H(+). Functionally, allows the formation of correctly charged Asn-tRNA(Asn) or Gln-tRNA(Gln) through the transamidation of misacylated Asp-tRNA(Asn) or Glu-tRNA(Gln) in organisms which lack either or both of asparaginyl-tRNA or glutaminyl-tRNA synthetases. The reaction takes place in the presence of glutamine and ATP through an activated phospho-Asp-tRNA(Asn) or phospho-Glu-tRNA(Gln). This is Aspartyl/glutamyl-tRNA(Asn/Gln) amidotransferase subunit B from Thermodesulfovibrio yellowstonii (strain ATCC 51303 / DSM 11347 / YP87).